Consider the following 653-residue polypeptide: Cytidine monophosphate-N-acetylneuraminic acid hydroxylase (653 aa).

One can recognise a Rieske domain in the interval 11–120 (LSPEETSELK…PEYNEDGSLD (110 aa)). [2Fe-2S] cluster contacts are provided by cysteine 62, histidine 64, cysteine 83, and histidine 86. Residues 596 to 622 (WNPSQATPAVEAKDPSSDSKDSATKPG) are disordered. Basic and acidic residues predominate over residues 606 to 618 (EAKDPSSDSKDSA). Residues 630–647 (LLRPLGIVVALVGVGVAI) form a helical membrane-spanning segment.

It belongs to the CMP-Neu5Ac hydroxylase family. Requires [2Fe-2S] cluster as cofactor.

The protein localises to the membrane. It carries out the reaction CMP-N-acetyl-beta-neuraminate + 2 Fe(II)-[cytochrome b5] + O2 + 2 H(+) = CMP-N-glycoloyl-beta-neuraminate + 2 Fe(III)-[cytochrome b5] + H2O. It participates in amino-sugar metabolism; N-acetylneuraminate metabolism. In terms of biological role, sialic acids are components of carbohydrate chains of glycoconjugates and are involved in cell-cell recognition and cell-pathogen interactions. Catalyzes the conversion of CMP-N-acetylneuraminic acid (CMP-Neu5Ac) into its hydroxylated derivative CMP-N-glycolylneuraminic acid (CMP-Neu5Gc), a sialic acid abundantly expressed at the surface of many cells. The protein is Cytidine monophosphate-N-acetylneuraminic acid hydroxylase (cnh) of Asterias rubens (Common European starfish).